Reading from the N-terminus, the 186-residue chain is Oligoribonuclease (186 aa).

In terms of domain architecture, Exonuclease spans 8–171; it reads LIWIDLEMTG…DDIRESIAEL (164 aa). Residue Y129 is part of the active site.

This sequence belongs to the oligoribonuclease family.

It localises to the cytoplasm. Functionally, 3'-to-5' exoribonuclease specific for small oligoribonucleotides. In Mannheimia succiniciproducens (strain KCTC 0769BP / MBEL55E), this protein is Oligoribonuclease.